Consider the following 736-residue polypeptide: MLRLLRPLLLLLLLPPPGSPEPPGLTQLSPGAPPQAPDLLYADGLRAYAAGAWAPAVALLREALRSQAALGRVRLDCGASCAADPGAALPAVLLGAPEPDSGPGPTQGSWERQLLRAALRRADCLTQCAARRLGPGGAARLRVGSALRDAFRRREPYNYLQRAYYQLKKLDLAAAAAHTFFVANPMHLQMREDMAKYRRMSGVRPQSFRDLETPPHWAAYDTGLELLGRQEAGLALPRLEEALQGSLAQMESCRADCEGPEEQQGAEEEEDGAASQGGLYEAIAGHWIQVLQCRQRCVGETATRPGRSFPVPDFLPNQLRRLHEAHAQVGNLSQAIENVLSVLLFYPEDEAAKRALNQYQAQLGEPRPGLGPREDIQRFILRSLGEKRQLYYAMEHLGTSFKDPDPWTPAALIPEALREKLREDQEKRPWDHEPVKPKPLTYWKDVLLLEGVTLTQDSRQLNGSERAVLDGLLTPAECGVLLQLAKDAAGAGARSGYRGRRSPHTPHERFEGLTVLKAAQLARAGTVGSQGAKLLLEVSERVRTLTQAYFSPERPLHLSFTHLVCRSAIEGEQEQRMDLSHPVHADNCVLDPDTGECWREPPAYTYRDYSGLLYLNDDFQGGDLFFTEPNALTVTARVRPRCGRLVAFSSGVENPHGVWAVTRGRRCALALWHTWAPEHREQEWIEAKELLQESQEEEEEEEEEMPSKDPSPEPPSRRHQRVQDKTGRAPRVREEL.

A signal peptide spans 1–20; it reads MLRLLRPLLLLLLLPPPGSP. TPR repeat units follow at residues 37–70, 154–187, and 216–249; these read PDLL…QAAL, REPY…NPMH, and HWAA…SLAQ. The segment at 253–275 is disordered; sequence CRADCEGPEEQQGAEEEEDGAAS. The segment covering 258–272 has biased composition (acidic residues); the sequence is EGPEEQQGAEEEEDG. The stretch at 316–349 is one TPR 4 repeat; that stretch reads PNQLRRLHEAHAQVGNLSQAIENVLSVLLFYPED. N-linked (GlcNAc...) asparagine glycosylation is found at Asn331 and Asn462. The 115-residue stretch at 561-675 folds into the Fe2OG dioxygenase domain; it reads THLVCRSAIE…RCALALWHTW (115 aa). Fe cation contacts are provided by His584, Asp586, and His656. Residue Arg666 is part of the active site. Positions 681–709 form a coiled coil; that stretch reads EQEWIEAKELLQESQEEEEEEEEEMPSKD. The disordered stretch occupies residues 689 to 736; the sequence is ELLQESQEEEEEEEEEMPSKDPSPEPPSRRHQRVQDKTGRAPRVREEL. Residues 694–704 show a composition bias toward acidic residues; that stretch reads SQEEEEEEEEE. Residues 721–736 show a composition bias toward basic and acidic residues; that stretch reads RVQDKTGRAPRVREEL. The Prevents secretion from ER signature appears at 733 to 736; that stretch reads REEL.

It belongs to the leprecan family. In terms of assembly, identified in a complex with PLOD1 and P3H4. Requires Fe cation as cofactor. L-ascorbate is required as a cofactor. Detected in fetal cartilage (at protein level). Weak expression in heart, lung, ovary and skeletal muscle.

It is found in the endoplasmic reticulum. It carries out the reaction L-prolyl-[collagen] + 2-oxoglutarate + O2 = trans-3-hydroxy-L-prolyl-[collagen] + succinate + CO2. Its function is as follows. Part of a complex composed of PLOD1, P3H3 and P3H4 that catalyzes hydroxylation of lysine residues in collagen alpha chains and is required for normal assembly and cross-linkling of collagen fibrils. Required for normal hydroxylation of lysine residues in type I collagen chains in skin, bone, tendon, aorta and cornea. Required for normal skin stability via its role in hydroxylation of lysine residues in collagen alpha chains and in collagen fibril assembly. Apparently not required for normal prolyl 3-hydroxylation on collagen chains, possibly because it functions redundantly with other prolyl 3-hydroxylases. In Homo sapiens (Human), this protein is Prolyl 3-hydroxylase 3.